Here is a 234-residue protein sequence, read N- to C-terminus: Glucosamine-6-phosphate deaminase (234 aa).

The active-site Proton acceptor; for enolization step is Asp-62. Catalysis depends on Asn-128, which acts as the For ring-opening step. Residue His-130 is the Proton acceptor; for ring-opening step of the active site. Glu-135 (for ring-opening step) is an active-site residue.

It belongs to the glucosamine/galactosamine-6-phosphate isomerase family. NagB subfamily.

The enzyme catalyses alpha-D-glucosamine 6-phosphate + H2O = beta-D-fructose 6-phosphate + NH4(+). Its pathway is amino-sugar metabolism; N-acetylneuraminate degradation; D-fructose 6-phosphate from N-acetylneuraminate: step 5/5. Its function is as follows. Catalyzes the reversible isomerization-deamination of glucosamine 6-phosphate (GlcN6P) to form fructose 6-phosphate (Fru6P) and ammonium ion. This chain is Glucosamine-6-phosphate deaminase, found in Streptococcus suis (strain 98HAH33).